Reading from the N-terminus, the 107-residue chain is Replication initiation control protein YabA (107 aa).

Zn(2+) is bound by residues H81, C83, C97, and C100.

It belongs to the YabA family. Homotetramer. Interacts with both DnaA and DnaN, acting as a bridge between these two proteins. Zn(2+) serves as cofactor.

It localises to the cytoplasm. The protein localises to the nucleoid. Its function is as follows. Involved in control of chromosome replication initiation. Inhibits the cooperative binding of DnaA to the oriC region, thus negatively regulating initiation of chromosome replication. Inhibits the ability of DnaA-ATP to form a helix on DNA; does not disassemble preformed DnaA-DNA helices. Decreases the residence time of DnaA on the chromosome at its binding sites (oriC, replication forks and promoter-binding sites). Tethers DnaA to the replication machinery via the DNA polymerase beta sliding clamp subunit (dnaN). Associates with oriC and other DnaA targets on the chromosome in a DnaA-dependent manner. In Streptococcus pyogenes serotype M3 (strain ATCC BAA-595 / MGAS315), this protein is Replication initiation control protein YabA.